The following is a 383-amino-acid chain: Na(+)/H(+) antiporter NhaA (383 aa).

Helical transmembrane passes span 10 to 30, 56 to 76, 91 to 111, 121 to 141, 150 to 170, 174 to 194, 206 to 226, 254 to 274, 289 to 308, 327 to 347, and 355 to 375; these read LIGGLILFSAALLAIVVNNSP, LMHWINDGLMAIYFLYIGLEI, IITPAIAAFAGLAMPSLIYLS, GWAIPSATDIAFTLGILALLG, LLVITIAIFDDIAAIAIIAIF, SLSLLSLSLGTLFILAMIICN, VVLGFFAWFCTIKSGVHATLA, PWIIYFILPVFAFANAGISFS, IIWGLFVGKQLGIFSILAVF, GISLLCGIGFTMSLFIGVLAF, and AIKIGVVVGSVLSGFFGYIVL.

It belongs to the NhaA Na(+)/H(+) (TC 2.A.33) antiporter family.

It is found in the cell inner membrane. The catalysed reaction is Na(+)(in) + 2 H(+)(out) = Na(+)(out) + 2 H(+)(in). In terms of biological role, na(+)/H(+) antiporter that extrudes sodium in exchange for external protons. In Francisella tularensis subsp. tularensis (strain SCHU S4 / Schu 4), this protein is Na(+)/H(+) antiporter NhaA.